A 104-amino-acid chain; its full sequence is PTS system lactose-specific EIIA component (104 aa).

A PTS EIIA type-3 domain is found at 4–102 (EEATLLGFEI…MKHLIELYKR (99 aa)). The active-site Tele-phosphohistidine intermediate is the histidine 78. At histidine 78 the chain carries Phosphohistidine; by HPr. Residue aspartate 81 coordinates Mg(2+).

As to quaternary structure, homotrimer. Requires Mg(2+) as cofactor.

The protein resides in the cytoplasm. The phosphoenolpyruvate-dependent sugar phosphotransferase system (sugar PTS), a major carbohydrate active transport system, catalyzes the phosphorylation of incoming sugar substrates concomitantly with their translocation across the cell membrane. The enzyme II LacEF PTS system is involved in lactose transport. This chain is PTS system lactose-specific EIIA component, found in Streptococcus mutans serotype c (strain ATCC 700610 / UA159).